A 430-amino-acid polypeptide reads, in one-letter code: Gamma-glutamyl phosphate reductase (430 aa).

Belongs to the gamma-glutamyl phosphate reductase family.

Its subcellular location is the cytoplasm. It catalyses the reaction L-glutamate 5-semialdehyde + phosphate + NADP(+) = L-glutamyl 5-phosphate + NADPH + H(+). Its pathway is amino-acid biosynthesis; L-proline biosynthesis; L-glutamate 5-semialdehyde from L-glutamate: step 2/2. In terms of biological role, catalyzes the NADPH-dependent reduction of L-glutamate 5-phosphate into L-glutamate 5-semialdehyde and phosphate. The product spontaneously undergoes cyclization to form 1-pyrroline-5-carboxylate. The chain is Gamma-glutamyl phosphate reductase from Rhodopseudomonas palustris (strain BisA53).